The primary structure comprises 476 residues: Bifunctional protein HldE (476 aa).

A ribokinase region spans residues 1–319; sequence MKVSLPAFEK…EALALHHGES (319 aa). 195–198 is a binding site for ATP; it reads NMSE. Residue aspartate 264 is part of the active site. A cytidylyltransferase region spans residues 345–476; sequence MTNGCFDILH…AIIQNIMANQ (132 aa).

It in the N-terminal section; belongs to the carbohydrate kinase PfkB family. The protein in the C-terminal section; belongs to the cytidylyltransferase family. Homodimer.

The catalysed reaction is D-glycero-beta-D-manno-heptose 7-phosphate + ATP = D-glycero-beta-D-manno-heptose 1,7-bisphosphate + ADP + H(+). The enzyme catalyses D-glycero-beta-D-manno-heptose 1-phosphate + ATP + H(+) = ADP-D-glycero-beta-D-manno-heptose + diphosphate. It functions in the pathway nucleotide-sugar biosynthesis; ADP-L-glycero-beta-D-manno-heptose biosynthesis; ADP-L-glycero-beta-D-manno-heptose from D-glycero-beta-D-manno-heptose 7-phosphate: step 1/4. The protein operates within nucleotide-sugar biosynthesis; ADP-L-glycero-beta-D-manno-heptose biosynthesis; ADP-L-glycero-beta-D-manno-heptose from D-glycero-beta-D-manno-heptose 7-phosphate: step 3/4. Catalyzes the phosphorylation of D-glycero-D-manno-heptose 7-phosphate at the C-1 position to selectively form D-glycero-beta-D-manno-heptose-1,7-bisphosphate. Its function is as follows. Catalyzes the ADP transfer from ATP to D-glycero-beta-D-manno-heptose 1-phosphate, yielding ADP-D-glycero-beta-D-manno-heptose. This chain is Bifunctional protein HldE, found in Shewanella baltica (strain OS185).